The sequence spans 212 residues: Uridine kinase (212 aa).

An ATP-binding site is contributed by 13–20; it reads GGSGSGKT.

It belongs to the uridine kinase family.

It is found in the cytoplasm. The enzyme catalyses uridine + ATP = UMP + ADP + H(+). It carries out the reaction cytidine + ATP = CMP + ADP + H(+). It functions in the pathway pyrimidine metabolism; CTP biosynthesis via salvage pathway; CTP from cytidine: step 1/3. Its pathway is pyrimidine metabolism; UMP biosynthesis via salvage pathway; UMP from uridine: step 1/1. The sequence is that of Uridine kinase from Bacillus cereus (strain G9842).